A 668-amino-acid chain; its full sequence is UvrABC system protein B (668 aa).

The Helicase ATP-binding domain occupies 31–416; it reads QGITDGVPAQ…RGHIIEQIIR (386 aa). 44–51 serves as a coordination point for ATP; it reads GTTGSGKT. Positions 97–120 match the Beta-hairpin motif; it reads YYDYYQPEAYIARSDTYIEKSLLI. One can recognise a Helicase C-terminal domain in the interval 433 to 596; it reads QIDDLLEEIR…ITPQPIIKPI (164 aa). Residues 621 to 656 form the UVR domain; that stretch reads EASIKTYEEAMYQAAQEFQFDEAAKYRDLMNAAKKQ.

This sequence belongs to the UvrB family. Forms a heterotetramer with UvrA during the search for lesions. Interacts with UvrC in an incision complex.

It localises to the cytoplasm. In terms of biological role, the UvrABC repair system catalyzes the recognition and processing of DNA lesions. A damage recognition complex composed of 2 UvrA and 2 UvrB subunits scans DNA for abnormalities. Upon binding of the UvrA(2)B(2) complex to a putative damaged site, the DNA wraps around one UvrB monomer. DNA wrap is dependent on ATP binding by UvrB and probably causes local melting of the DNA helix, facilitating insertion of UvrB beta-hairpin between the DNA strands. Then UvrB probes one DNA strand for the presence of a lesion. If a lesion is found the UvrA subunits dissociate and the UvrB-DNA preincision complex is formed. This complex is subsequently bound by UvrC and the second UvrB is released. If no lesion is found, the DNA wraps around the other UvrB subunit that will check the other stand for damage. This is UvrABC system protein B from Chlamydia trachomatis serovar D (strain ATCC VR-885 / DSM 19411 / UW-3/Cx).